The primary structure comprises 83 residues: MEKIRTLQGRVISNKMQKSAVVAIERFVKHIIYGKFIKRTTKLHIHDEKNECTVGDLIEIRESRPISKTKSWVLVRIIEKTVF.

It belongs to the universal ribosomal protein uS17 family. Part of the 30S ribosomal subunit.

In terms of biological role, one of the primary rRNA binding proteins, it binds specifically to the 5'-end of 16S ribosomal RNA. In Buchnera aphidicola subsp. Acyrthosiphon pisum (strain 5A), this protein is Small ribosomal subunit protein uS17.